Here is a 61-residue protein sequence, read N- to C-terminus: UPF0434 protein PA14_25520 (61 aa).

Belongs to the UPF0434 family.

The polypeptide is UPF0434 protein PA14_25520 (Pseudomonas aeruginosa (strain UCBPP-PA14)).